The following is a 202-amino-acid chain: Small ribosomal subunit protein uS4c (202 aa).

Residues 90–153 (MRLDNVTFRL…KSETIISKNI (64 aa)) form the S4 RNA-binding domain.

This sequence belongs to the universal ribosomal protein uS4 family. Part of the 30S ribosomal subunit. Contacts protein S5. The interaction surface between S4 and S5 is involved in control of translational fidelity.

Its subcellular location is the plastid. It is found in the chloroplast. One of the primary rRNA binding proteins, it binds directly to 16S rRNA where it nucleates assembly of the body of the 30S subunit. In terms of biological role, with S5 and S12 plays an important role in translational accuracy. The chain is Small ribosomal subunit protein uS4c (rps4) from Hypnum cupressiforme (Cypress-leaved plait-moss).